Reading from the N-terminus, the 313-residue chain is ANLFAMQLATASVLPAVLTAAIELDLLEIMARAGPGAYLTPGEVASQLPTQNPDAPVMLDRIFRLLASYSVLTCTLCDLPEGKVERLYGLAPLCKFLVKNEDGVSLAPLRLIDQDRVFLESWYYMKDAILEGGIPFHKAHGMTAFDYPGTDPRFNKIFNRAMSDHSTIMMKKILETYNGFEGLKTVVDVGGGTGAILNMIVAKYPSIKGINFDLPHVIEDAPSYPGVEHVGGDMFVNIPNGDAVFMKWICHDWSDEHCAKLLKNCYDALPVNGRVIVAEYILPAYPDQSLSTKGVIHMDCIMLTHFSGGKERT.

A substrate-binding site is contributed by 112–118; the sequence is IDQDRVF. Residues 144–162 form a substrate binding region; that stretch reads AFDYPGTDPRFNKIFNRAM. Positions 190, 213, 233, 234, and 247 each coordinate S-adenosyl-L-methionine. His-251 (proton acceptor) is an active-site residue.

It belongs to the class I-like SAM-binding methyltransferase superfamily. Cation-independent O-methyltransferase family. COMT subfamily. In terms of assembly, homodimer.

The catalysed reaction is (E)-caffeate + S-adenosyl-L-methionine = (E)-ferulate + S-adenosyl-L-homocysteine + H(+). The protein operates within aromatic compound metabolism; phenylpropanoid biosynthesis. In terms of biological role, catalyzes the conversion of caffeic acid to ferulic acid and of 5-hydroxyferulic acid to sinapic acid. The resulting products may subsequently be converted to the corresponding alcohols that are incorporated into lignins. This is Caffeic acid 3-O-methyltransferase (COMT1) from Eucalyptus globulus (Tasmanian blue gum).